Reading from the N-terminus, the 323-residue chain is L-lactate dehydrogenase 1 (323 aa).

Residues Val18, Asp39, Tyr69, and 83-84 each bind NAD(+); that span reads GA. Substrate-binding residues include Gln86 and Arg92. NAD(+) is bound by residues Ser105, 122-124, and Ser147; that span reads VAN. 124–127 lines the substrate pocket; it reads NPVD. 152–155 serves as a coordination point for substrate; that stretch reads DTGR. His179 (proton acceptor) is an active-site residue. Tyr223 bears the Phosphotyrosine mark. Position 232 (Thr232) interacts with substrate.

This sequence belongs to the LDH/MDH superfamily. LDH family. Homotetramer.

It localises to the cytoplasm. It catalyses the reaction (S)-lactate + NAD(+) = pyruvate + NADH + H(+). Its pathway is fermentation; pyruvate fermentation to lactate; (S)-lactate from pyruvate: step 1/1. Catalyzes the conversion of lactate to pyruvate. In Lactobacillus acidophilus (strain ATCC 700396 / NCK56 / N2 / NCFM), this protein is L-lactate dehydrogenase 1.